We begin with the raw amino-acid sequence, 351 residues long: Cytoplasmic dynein 2 light intermediate chain 1 (351 aa).

The segment at 304–335 (TLKAIQDPARDPQYAESEVDEMRVQKDQELEQ) is disordered. Over residues 323–335 (DEMRVQKDQELEQ) the composition is skewed to basic and acidic residues.

This sequence belongs to the dynein light intermediate chain family. Light intermediate chain of the cytoplasmic dynein complex 2, a multisubunit complex composed at least of eleven different proteins. The cytoplasmic dynein 2 complex consists of two catalytic heavy chains (HCs) and a number of non-catalytic subunits presented by intermediate chains (ICs), light intermediate chains (LICs) and light chains (LCs). Among them, a heavy chain (DYNC2H1), two intermediate chains (DYNC2I2 and DYNC2I1), a light intermediate chain (DYNC2LI1), and a light chain (DYNLT2B) are unique to the dynein-2 complex, but a subset of light chains are also shared by dynein-1 and dynein-2 complexes. Dynein-2 complex is built around two copies of cytoplasmic dynein 2 heavy chain 1 (DYNC2H1). The C-terminal region forms the motor domain, which converts the energy from ATP hydrolysis into movement. Its N-terminal region forms the tail, an extended structure that binds the other subunits and holds the two heavy chains in a homodimer. Interacts with DYNC2H1 (via N-terminus); this interaction stabilizes the dynein-2 complex structure.

The protein resides in the cytoplasm. The protein localises to the cell projection. It is found in the cilium. It localises to the cytoskeleton. Its subcellular location is the cilium basal body. The protein resides in the cilium axoneme. The protein localises to the microtubule organizing center. It is found in the centrosome. Functionally, acts as one of several non-catalytic accessory components of the cytoplasmic dynein 2 complex (dynein-2 complex), a motor protein complex that drives the movement of cargos along microtubules within cilia and flagella in concert with the intraflagellar transport (IFT) system, facilitating the assembly of these organelles. Involved in the regulation of ciliary length. The polypeptide is Cytoplasmic dynein 2 light intermediate chain 1 (Dync2li1) (Rattus norvegicus (Rat)).